Reading from the N-terminus, the 166-residue chain is ATP synthase subunit b (166 aa).

A helical transmembrane segment spans residues 15 to 37 (TLYYLLIFAALLLLVKHFAWGPV).

The protein belongs to the ATPase B chain family. As to quaternary structure, F-type ATPases have 2 components, F(1) - the catalytic core - and F(0) - the membrane proton channel. F(1) has five subunits: alpha(3), beta(3), gamma(1), delta(1), epsilon(1). F(0) has three main subunits: a(1), b(2) and c(10-14). The alpha and beta chains form an alternating ring which encloses part of the gamma chain. F(1) is attached to F(0) by a central stalk formed by the gamma and epsilon chains, while a peripheral stalk is formed by the delta and b chains.

It is found in the cell membrane. Functionally, f(1)F(0) ATP synthase produces ATP from ADP in the presence of a proton or sodium gradient. F-type ATPases consist of two structural domains, F(1) containing the extramembraneous catalytic core and F(0) containing the membrane proton channel, linked together by a central stalk and a peripheral stalk. During catalysis, ATP synthesis in the catalytic domain of F(1) is coupled via a rotary mechanism of the central stalk subunits to proton translocation. Its function is as follows. Component of the F(0) channel, it forms part of the peripheral stalk, linking F(1) to F(0). The protein is ATP synthase subunit b of Lactobacillus johnsonii (strain CNCM I-12250 / La1 / NCC 533).